The chain runs to 230 residues: Large ribosomal subunit protein uL4 (230 aa).

Positions 59-113 are disordered; sequence RQGTHATKTRGEVSGGGKKPYRQKGTGRARQGSTRAPQFTGGGTVHGPQPRDYSQ.

Belongs to the universal ribosomal protein uL4 family. In terms of assembly, part of the 50S ribosomal subunit.

One of the primary rRNA binding proteins, this protein initially binds near the 5'-end of the 23S rRNA. It is important during the early stages of 50S assembly. It makes multiple contacts with different domains of the 23S rRNA in the assembled 50S subunit and ribosome. Functionally, forms part of the polypeptide exit tunnel. This is Large ribosomal subunit protein uL4 from Nocardia farcinica (strain IFM 10152).